The following is a 314-amino-acid chain: Ribosomal RNA small subunit methyltransferase H (314 aa).

S-adenosyl-L-methionine-binding positions include 36 to 38 (AGH), Asp-56, Phe-83, Asp-104, and Gln-111.

The protein belongs to the methyltransferase superfamily. RsmH family.

It localises to the cytoplasm. The enzyme catalyses cytidine(1402) in 16S rRNA + S-adenosyl-L-methionine = N(4)-methylcytidine(1402) in 16S rRNA + S-adenosyl-L-homocysteine + H(+). In terms of biological role, specifically methylates the N4 position of cytidine in position 1402 (C1402) of 16S rRNA. The polypeptide is Ribosomal RNA small subunit methyltransferase H (Brevibacillus brevis (strain 47 / JCM 6285 / NBRC 100599)).